A 48-amino-acid polypeptide reads, in one-letter code: Small, acid-soluble spore protein P (48 aa).

Residues 1–19 (MTNKNTGKDIRQNSPKEHQ) show a composition bias toward basic and acidic residues. The disordered stretch occupies residues 1 to 48 (MTNKNTGKDIRQNSPKEHQSGQPEPLSGSKKVKNRNHTRQKHNSHHDM). Basic residues predominate over residues 30–48 (KKVKNRNHTRQKHNSHHDM).

The protein belongs to the SspP family.

It localises to the spore core. The protein is Small, acid-soluble spore protein P of Bacillus pumilus (strain SAFR-032).